The sequence spans 1954 residues: Chromodomain-helicase-DNA-binding protein 5 (1954 aa).

Disordered stretches follow at residues 1–134 (MRGP…PKSS) and 225–338 (PLAV…GDGY). Composition is skewed to acidic residues over residues 17–37 (EEMENEDEMSEEEDGGLEAFD) and 72–90 (NDELSENEEDLEEKSESEG). Residues 96–115 (NKKKKKKLKDKKEKKAKRKK) show a composition bias toward basic residues. Over residues 227 to 237 (AVSPPQVPQPV) the composition is skewed to pro residues. A compositionally biased stretch (basic residues) spans 251 to 272 (GVRKKIKGSKDGKKKGKGKKTA). Over residues 291–301 (SEEDEREESDF) the composition is skewed to acidic residues. Over residues 321 to 330 (KKSKRRRKKK) the composition is skewed to basic residues. 2 PHD-type zinc fingers span residues 343-390 (QDYC…CEKE) and 416-463 (MEFC…CTCP). Residues 343–653 (QDYCEVCQQG…HRELMLGEDT (311 aa)) form a histone-binding region. Positions 497-554 (LPPPKPLEGIPEREFFVKWAGLSYWHCSWVKELQLELYHTVMYRNYQRKNDMDEPPPF) constitute a Chromo 1 domain. Residues 549-571 (DEPPPFDYGSGDEDGKSEKRKNK) form a disordered region. Basic and acidic residues predominate over residues 561–571 (EDGKSEKRKNK). The region spanning 592–653 (MMIHRILNHS…HRELMLGEDT (62 aa)) is the Chromo 2 domain. Residues 712–896 (RFSWAQGTDT…FHLLNFLTPE (185 aa)) enclose the Helicase ATP-binding domain. 725 to 732 (DEMGLGKT) is a binding site for ATP. The short motif at 847-850 (DEAH) is the DEAH box element. Residues 1028 to 1193 (LLQKMLKKLR…MTKQELDDIL (166 aa)) form the Helicase C-terminal domain. 5 disordered regions span residues 1209–1253 (MSQG…EDSS), 1351–1411 (YNDA…LPPL), 1524–1564 (YSTP…APLG), 1597–1640 (AALD…REEV), and 1658–1696 (SRGDSSELRPDDTKAEEKEPIETQQNGDKEEDDEGKKED). 2 stretches are compositionally biased toward acidic residues: residues 1355 to 1366 (SQEDQEWQDELS) and 1376 to 1385 (SEDEDEDFEE). Gln1390 carries the N5-methylglutamine modification. Ser1554 is subject to Phosphoserine. Over residues 1554 to 1564 (SPAHLLPAPLG) the composition is skewed to low complexity. Basic and acidic residues-rich tracts occupy residues 1600 to 1627 (DRVESEDKHESPASKERAREERPEETEK) and 1658 to 1678 (SRGDSSELRPDDTKAEEKEPI).

Belongs to the SNF2/RAD54 helicase family. In terms of assembly, component of the nucleosome remodeling and deacetylase (NuRD) repressor complex, composed of core proteins MTA1, MTA2, MTA3, RBBP4, RBBP7, HDAC1, HDAC2, MBD2, MBD3, and peripherally associated proteins CDK2AP1, CDK2AP2, GATAD2A, GATAD2B, CHD3, CHD4 and CHD5. The exact stoichiometry of the NuRD complex is unknown, and some subunits such as MBD2 and MBD3, GATAD2A and GATAD2B, and CHD3, CHD4 and CHD5 define mutually exclusive NuRD complexes. Interacts with HDAC2. Methylated at Gln-1390 by N6AMT1. Preferentially expressed in total brain, fetal brain, and cerebellum. It is also moderately expressed in the adrenal gland and detected in testis.

The protein localises to the nucleus. The protein resides in the chromosome. The catalysed reaction is ATP + H2O = ADP + phosphate + H(+). In terms of biological role, ATP-dependent chromatin-remodeling factor that binds DNA through histones and regulates gene transcription. May specifically recognize and bind trimethylated 'Lys-27' (H3K27me3) and non-methylated 'Lys-4' of histone H3. Acts as a component of the histone deacetylase NuRD complex which participates in the remodeling of chromatin. Plays a role in the development of the nervous system by activating the expression of genes promoting neuron terminal differentiation. In parallel, it may also positively regulate the trimethylation of histone H3 at 'Lys-27' thereby specifically repressing genes that promote the differentiation into non-neuronal cell lineages. Regulates the expression of genes involved in cell proliferation and differentiation. Downstream activated genes may include CDKN2A that positively regulates the p53/TP53 pathway, which in turn, prevents cell proliferation. In spermatogenesis, it probably regulates histone hyperacetylation and the replacement of histones by transition proteins in chromatin, a crucial step in the condensation of spermatid chromatin and the production of functional spermatozoa. The chain is Chromodomain-helicase-DNA-binding protein 5 from Homo sapiens (Human).